A 441-amino-acid chain; its full sequence is MERTPKRAHGFRSTKPVKRTAEVMMEEEEEEVEVVAPGRGATRKKVSRREESPSPVRRVTRRRETVVDDEENASDEESPEAPLSDPVVYGAQRAMATVASICEALDLQWQGASVRPDDSIWTKMGGTYVRKKHPEFRLTFSSYDSFNAQVGRFLAAVIYSRAGLEPKFVPGGAHVWRHGWFPALQEPFPKCMHGVDMVTKPRTVELNPSSEAGKRALAEQNGVIEKNRFGRQVVVLRFDANAVCYKDQEHSGFPHPHAHGSCAMVFSDAAKAVSAMRHDIDWTKALYPNADKRRAEECVLISTNCNCNYASDRAISGRQFCKMTPYKLNGTDDITRDMVESRPDMKAHKKNPHTMVFTCCNPQAASGGAGRGLKKTEKTCAWRLSAMDLRYAYVFATELFTAVMGSSEPTHVPEFRWNESYAFKTEVLAPVSPIASDDPFA.

The segment covering 1–18 (MERTPKRAHGFRSTKPVK) has biased composition (basic residues). A disordered region spans residues 1-85 (MERTPKRAHG…EESPEAPLSD (85 aa)). 2 stretches are compositionally biased toward acidic residues: residues 24–33 (MMEEEEEEVE) and 67–79 (VDDEENASDEESP). 2 residues coordinate Zn(2+): Cys-191 and His-193. Residues 204-236 (VELNPSSEAGKRALAEQNGVIEKNRFGRQVVVL) are flexible loop. Residues Cys-244, Cys-262, Cys-305, Cys-307, Cys-359, and Cys-380 each contribute to the Zn(2+) site. Residues 426 to 441 (EVLAPVSPIASDDPFA) form a C-terminal arm, DBP binding region.

The protein belongs to the adenoviridae E2A DNA-binding protein family. In terms of assembly, homomultimerizes on viral ssDNA bound to pTP. Forms a initiation complex with viral polymerase, pTP and hosts NFIA and POU2F1/OCT1. Interacts with host SRCAP.

It localises to the host nucleus. Its function is as follows. Plays a role in the elongation phase of viral strand displacement replication by unwinding the template in an ATP-independent fashion, employing its capacity to form multimers. Also enhances the rate of initiation. Released from template upon second strand synthesis. Assembles in complex with viral pTP, viral pol, host NFIA and host POU2F1/OCT1 on viral origin of replication. Covers the whole ssDNA genome during synthesis. The complementary strand synthesis induces its relese from DNA template. May inhibit cellular transcription mediated by the interaction between host SRCAP and CBP. This chain is DNA-binding protein, found in Fowl adenovirus A serotype 1 (strain CELO / Phelps) (FAdV-1).